Consider the following 385-residue polypeptide: MLTRADLEAREAATLAPYATLSAQSRGREYPEAESATRTAFQKDRDRILHTTAFRRLEYKTQVFVNAQGDHYRTRLTHTLEVGQVARSVALTLGLNETLAEAIALAHDLGHPPFGHAGERVLDTLMAEYGVPPENTFDHNTQARRIVTRLEDRYPDFPGLNLTLETLDGLNKHDRAGLGPPSLEAQLVDAADALAYTAHDLDDGLRSGLLTPQQLETLPLWRELLARVPVQSPQLTERDRRTLHRELLGWLIEDLTTASEAAIRARGVTSAAEVRALPERLITYSAPMRELLHETGLFLREHLYRHWRVEMQVEQAARLLQTLFTAYLARPSMLPPQVRAQAELDGLPRAICDFMAGMTDRYATEMYAALVPTSGPVSWLGELRN.

In terms of domain architecture, HD spans 75-197 (RLTHTLEVGQ…VDAADALAYT (123 aa)).

It belongs to the dGTPase family. Type 2 subfamily.

The polypeptide is Deoxyguanosinetriphosphate triphosphohydrolase-like protein (Deinococcus geothermalis (strain DSM 11300 / CIP 105573 / AG-3a)).